The following is a 358-amino-acid chain: GTPase Obg (358 aa).

Positions 1–159 (MKFLDEAKVY…RWIWLRLKLI (159 aa)) constitute an Obg domain. One can recognise an OBG-type G domain in the interval 160-327 (ADAGLVGLPN…VLRALVEVIG (168 aa)). Residues 166 to 173 (GLPNAGKS), 191 to 195 (FTTLH), 212 to 215 (DIPG), 279 to 282 (NKID), and 308 to 310 (SGV) contribute to the GTP site. 2 residues coordinate Mg(2+): S173 and T193. The disordered stretch occupies residues 335–358 (AKGADASAAQAMETPVARAKPWSP).

This sequence belongs to the TRAFAC class OBG-HflX-like GTPase superfamily. OBG GTPase family. In terms of assembly, monomer. Mg(2+) is required as a cofactor.

The protein resides in the cytoplasm. Its function is as follows. An essential GTPase which binds GTP, GDP and possibly (p)ppGpp with moderate affinity, with high nucleotide exchange rates and a fairly low GTP hydrolysis rate. Plays a role in control of the cell cycle, stress response, ribosome biogenesis and in those bacteria that undergo differentiation, in morphogenesis control. In Nitrobacter winogradskyi (strain ATCC 25391 / DSM 10237 / CIP 104748 / NCIMB 11846 / Nb-255), this protein is GTPase Obg.